The sequence spans 364 residues: Growth hormone secretagogue receptor type 1 (364 aa).

Residues 1–40 (MWNATPSEEPEPNVTLDLDWDASPGNDSLPDELLPLFPAP) are Extracellular-facing. Asn13 and Asn26 each carry an N-linked (GlcNAc...) asparagine glycan. A helical transmembrane segment spans residues 41-66 (LLAGVTATCVALFVVGISGNLLTMLV). The Cytoplasmic portion of the chain corresponds to 67–72 (VSRFRE). The chain crosses the membrane as a helical span at residues 73 to 96 (LRTTTNLYLSSMAFSDLLIFLCMP). Over 97 to 117 (LDLVRLWQYRPWNFGDLLCKL) the chain is Extracellular. A disulfide bridge connects residues Cys115 and Cys197. Residues 118–139 (FQFVSESCTYATVLTITALSVE) form a helical membrane-spanning segment. Over 140–162 (RYFAICFPLRAKVVVTKGRVKLV) the chain is Cytoplasmic. Residues 163-183 (ILVIWAVAFCSAGPIFVLVGV) form a helical membrane-spanning segment. The Extracellular segment spans residues 184 to 211 (EHENGTDPRDTNECRATEFAVRSGLLTV). An N-linked (GlcNAc...) asparagine glycan is attached at Asn187. A helical transmembrane segment spans residues 212 to 235 (MVWVSSVFFFLPVFCLTVLYSLIG). Residues 236–263 (RKLWRRRGDAAVGASLRDQNHKQTVKML) are Cytoplasmic-facing. The chain crosses the membrane as a helical span at residues 264–285 (AVVVFAFILCWLPFHVGRYLFS). The Extracellular portion of the chain corresponds to 286–302 (KSFEPGSLEIAQISQYC). A helical transmembrane segment spans residues 303-326 (NLVSFVLFYLSAAINPILYNIMSK). Residues 327–364 (KYRVAVFKLLGFESFSQRKLSTLKDESSRAWTKSSINT) lie on the Cytoplasmic side of the membrane.

This sequence belongs to the G-protein coupled receptor 1 family.

It is found in the cell membrane. Receptor for ghrelin, coupled to G-alpha-11 proteins. Stimulates growth hormone secretion. Also binds other growth hormone releasing peptides (GHRP) (e.g. Met-enkephalin and GHRP-6) as well as non-peptide, low molecular weight secretagogues (e.g. L-692,429, MK-0677, adenosine). The polypeptide is Growth hormone secretagogue receptor type 1 (Ghsr) (Rattus norvegicus (Rat)).